Here is a 357-residue protein sequence, read N- to C-terminus: Serine/threonine-protein kinase nekl-2 (357 aa).

Residues 4–267 (YEKVRVVGRG…VSQLLSDPLV (264 aa)) form the Protein kinase domain. Residues 10 to 18 (VGRGAFGVC) and K35 contribute to the ATP site. D137 serves as the catalytic Proton acceptor. The segment covering 281–290 (IEPPPTDKRK) has biased composition (basic and acidic residues). The tract at residues 281–357 (IEPPPTDKRK…QSRSQVHSKY (77 aa)) is disordered. Polar residues-rich tracts occupy residues 293-327 (ASLS…QLTP) and 336-357 (FFSS…HSKY).

The protein belongs to the protein kinase superfamily. NEK Ser/Thr protein kinase family. NIMA subfamily. Requires Mg(2+) as cofactor. As to expression, expressed in hypodermal cells including in hyp7 syncytium but not in seam cells.

It is found in the cytoplasm. The catalysed reaction is L-seryl-[protein] + ATP = O-phospho-L-seryl-[protein] + ADP + H(+). It catalyses the reaction L-threonyl-[protein] + ATP = O-phospho-L-threonyl-[protein] + ADP + H(+). In terms of biological role, probable serine/threonine-protein kinase required for the completion of molting. May play a role in endocytosis in the hypodermis syncytium. This is Serine/threonine-protein kinase nekl-2 from Caenorhabditis elegans.